A 1058-amino-acid chain; its full sequence is Zinc finger protein 865 (1058 aa).

Disordered regions lie at residues 1-24 (MEAN…EDGV), 58-134 (LPCT…PPLF), and 156-201 (GNLK…ACDP). Over residues 8–21 (SGAGGGGSSGIGGE) the composition is skewed to gly residues. The segment covering 61–78 (TPGPPPQPPPQPPPPQYD) has biased composition (pro residues). Low complexity predominate over residues 93–113 (SSSSSSSSSSSSSSSSSSSSS). Positions 120–133 (PPLPPTFGAPPPPL) are enriched in pro residues. Low complexity predominate over residues 172-187 (GLGTPTGTPGPLTTPS). 2 C2H2-type zinc fingers span residues 220 to 242 (FPCG…MLVH) and 248 to 270 (YECG…RRCH). Positions 269-342 (CHKDVPPTPT…PPGVAMPPSA (74 aa)) are disordered. Residues 294 to 324 (PVSTASATASSDPAAVSSGPSATPATPATST) show a composition bias toward low complexity. C2H2-type zinc fingers lie at residues 350 to 372 (FACS…QIIH), 378 to 400 (FSCS…VKTH), 407 to 429 (LPCG…QAAH), 439 to 461 (YPCD…KAAH), 546 to 568 (FCCG…ERIH), 574 to 596 (HQCP…HVVH), 602 to 624 (YKCE…RQVH), 664 to 686 (YACS…KEAH), and 692 to 714 (YGCD…KLVH). Residues 459–486 (AAHAPPVATEPAKDGAASVPQPPPPFPP) are disordered. The disordered stretch occupies residues 721–743 (LLAPTPSGPQSSDGGSSGGGTDA). 9 C2H2-type zinc fingers span residues 791–813 (FSCA…KYVH), 819–841 (LGCG…RRSH), 847–869 (FRCP…QRCH), 875–897 (YRCG…RVVH), 903–925 (FKCG…RRLH), 931–953 (QRCG…QRLH), 959–981 (YRCE…QRAH), 988–1010 (LRCP…LAAH), and 1016–1038 (FRCS…RLMH). Lys801 participates in a covalent cross-link: Glycyl lysine isopeptide (Lys-Gly) (interchain with G-Cter in SUMO2). Lys1039 participates in a covalent cross-link: Glycyl lysine isopeptide (Lys-Gly) (interchain with G-Cter in SUMO2).

The protein belongs to the krueppel C2H2-type zinc-finger protein family.

Its subcellular location is the nucleus. Its function is as follows. May be involved in transcriptional regulation. In Mus musculus (Mouse), this protein is Zinc finger protein 865 (Znf865).